The chain runs to 429 residues: Histidine--tRNA ligase (429 aa).

Belongs to the class-II aminoacyl-tRNA synthetase family. Homodimer.

Its subcellular location is the cytoplasm. The catalysed reaction is tRNA(His) + L-histidine + ATP = L-histidyl-tRNA(His) + AMP + diphosphate + H(+). The polypeptide is Histidine--tRNA ligase (Pseudomonas putida (strain W619)).